We begin with the raw amino-acid sequence, 375 residues long: MSTLGRSKTPSRDEPKKPGVFEKLSGTLSRKKKAPEDEHGNQGGAHHATDEDEVLELELEGREALDQSLVPVLARNIWLEEGEIRRYLTKETARDQKLAQVVDLLIYWLNEELADQRIVVRHLQEDLFDGQIIQKLLEKLEQIRIEVPEVSQSEEGQRQKLQIVVQTANRILGQPREQEKWSADLIHQKDFTAIIQLLVLLALHYRAPVRFPDNVVANVVVAQKEHGQVKTHRITEQITTVQTELAPKGTRDAFDTLFDYGPDKLAHVKTSLLAFCNKHLNKINLEVSDLDNQFQDGVFLVLLVGLLEGYFVPLYHFNLQVQSHEEKVKNVQFAFKLMEDTGLEKPRSRVQDIANGDVKSTLRLLHLLFTKYKHI.

Positions 1 to 51 (MSTLGRSKTPSRDEPKKPGVFEKLSGTLSRKKKAPEDEHGNQGGAHHATDE) are disordered. Residues 10–20 (PSRDEPKKPGV) show a composition bias toward basic and acidic residues. Calponin-homology (CH) domains lie at 99-206 (AQVV…LHYR) and 266-373 (AHVK…TKYK).

It belongs to the parvin family. In terms of assembly, may interact (via calponin-homology (CH) 2 domain) with pat-4 (via kinase domain). May form a complex with unc-112 and pat-4. Component of an integrin containing attachment complex, composed of at least pat-2, pat-3, pat-4, pat-6, unc-52, unc-97 and unc-112. In terms of tissue distribution, expressed from 1.5 stage embryos, mostly within the muscle cells. In adult hermaphrodites, expressed in the attachments of other muscles, including the uterine, anal depressor, anal sphincter, and vulval muscles, as well as in the spermatheca and the distal tip cells. Expressed in mechanosensory receptor neurons ALML/R, PLML/R, AVM, and PVM. Localizes at body wall muscle attachments.

The protein localises to the cytoplasm. It is found in the cytoskeleton. It localises to the myofibril. The protein resides in the sarcomere. Its subcellular location is the m line. The protein localises to the perikaryon. It is found in the cell projection. It localises to the axon. In terms of biological role, involved in the regulation of cell adhesion and cytoskeleton organization. Component of an integrin containing attachment complex, which is required for muscle development and maintenance. During embryonic development, required to recruit cpna-1, unc-89 and myofilaments to newly forming integrin attachments composed of integrins pat-2/pat-3, pat-4 and unc-112. Also required to reposition the integrin-based attachments so that they form the highly ordered array of dense body and M-line attachments that are characteristic of mature muscle cells. During the formation of neuromuscular junctions at the larval stage, negatively regulates membrane protrusion from body wall muscles. The protein is Paralyzed arrest at two-fold protein 6 of Caenorhabditis elegans.